The chain runs to 330 residues: MISFSSFYKQISDSSLQHWLETLPAILGEWQREHKHGSLPKWEKVLNKLHYPQPDTIDFTTSVTIGSGEQLSAGEREKLENLLAIFKPWRKGPYSIHGVEIDTEWRSDWKWERIAPHISPLANRTVLDVGCGSGYHMWRMLGEGAKHVVGIDPSPMFMCQFEAVKRIAGNEHPVHFLPLGIEELPPLDAFDTVFSMGVLYHRRSPIDHLIQLRDQLRTGGELVLETLVIDGDENTVLVPEDRYGKMNNVWFLPSVKALMLWLKKSDFIDIRCVDVDVTSLAEQRSTHWMPNESLVDYLDPNDVSLTVEGYPAPKRATIIATKNQPNKETK.

Residues K91, W105, K110, G130, 152-154 (DPS), 181-182 (IE), M196, Y200, and R315 each bind carboxy-S-adenosyl-L-methionine.

This sequence belongs to the class I-like SAM-binding methyltransferase superfamily. CmoB family. In terms of assembly, homotetramer.

The catalysed reaction is carboxy-S-adenosyl-L-methionine + 5-hydroxyuridine(34) in tRNA = 5-carboxymethoxyuridine(34) in tRNA + S-adenosyl-L-homocysteine + H(+). Functionally, catalyzes carboxymethyl transfer from carboxy-S-adenosyl-L-methionine (Cx-SAM) to 5-hydroxyuridine (ho5U) to form 5-carboxymethoxyuridine (cmo5U) at position 34 in tRNAs. The sequence is that of tRNA U34 carboxymethyltransferase from Shewanella piezotolerans (strain WP3 / JCM 13877).